A 303-amino-acid polypeptide reads, in one-letter code: tRNA dimethylallyltransferase (303 aa).

11 to 18 (GPTGVGKS) is an ATP binding site. 13–18 (TGVGKS) lines the substrate pocket. 2 interaction with substrate tRNA regions span residues 36-39 (DSRQ) and 159-163 (QRVLR).

This sequence belongs to the IPP transferase family. As to quaternary structure, monomer. Mg(2+) is required as a cofactor.

It catalyses the reaction adenosine(37) in tRNA + dimethylallyl diphosphate = N(6)-dimethylallyladenosine(37) in tRNA + diphosphate. Catalyzes the transfer of a dimethylallyl group onto the adenine at position 37 in tRNAs that read codons beginning with uridine, leading to the formation of N6-(dimethylallyl)adenosine (i(6)A). The sequence is that of tRNA dimethylallyltransferase from Lawsonia intracellularis (strain PHE/MN1-00).